A 315-amino-acid polypeptide reads, in one-letter code: Acetyl-coenzyme A carboxylase carboxyl transferase subunit alpha (315 aa).

One can recognise a CoA carboxyltransferase C-terminal domain in the interval 39–293 (RLQDKSSTLT…RADLIEQLDM (255 aa)).

The protein belongs to the AccA family. As to quaternary structure, acetyl-CoA carboxylase is a heterohexamer composed of biotin carboxyl carrier protein (AccB), biotin carboxylase (AccC) and two subunits each of ACCase subunit alpha (AccA) and ACCase subunit beta (AccD).

It localises to the cytoplasm. It catalyses the reaction N(6)-carboxybiotinyl-L-lysyl-[protein] + acetyl-CoA = N(6)-biotinyl-L-lysyl-[protein] + malonyl-CoA. The protein operates within lipid metabolism; malonyl-CoA biosynthesis; malonyl-CoA from acetyl-CoA: step 1/1. Its function is as follows. Component of the acetyl coenzyme A carboxylase (ACC) complex. First, biotin carboxylase catalyzes the carboxylation of biotin on its carrier protein (BCCP) and then the CO(2) group is transferred by the carboxyltransferase to acetyl-CoA to form malonyl-CoA. In Pseudomonas entomophila (strain L48), this protein is Acetyl-coenzyme A carboxylase carboxyl transferase subunit alpha.